Reading from the N-terminus, the 207-residue chain is 2,3-bisphosphoglycerate-dependent phosphoglycerate mutase (207 aa).

Substrate-binding positions include 10 to 17, 23 to 24, Arg62, 89 to 92, Lys100, 116 to 117, and 160 to 161; these read RHGQSEWN, TG, ERDY, RR, and GN. The active-site Tele-phosphohistidine intermediate is His11. Glu89 acts as the Proton donor/acceptor in catalysis.

This sequence belongs to the phosphoglycerate mutase family. BPG-dependent PGAM subfamily. As to quaternary structure, homodimer.

It catalyses the reaction (2R)-2-phosphoglycerate = (2R)-3-phosphoglycerate. Its pathway is carbohydrate degradation; glycolysis; pyruvate from D-glyceraldehyde 3-phosphate: step 3/5. Catalyzes the interconversion of 2-phosphoglycerate and 3-phosphoglycerate. This is 2,3-bisphosphoglycerate-dependent phosphoglycerate mutase from Nitrobacter hamburgensis (strain DSM 10229 / NCIMB 13809 / X14).